The following is a 351-amino-acid chain: Dihydroorotate dehydrogenase (quinone) (351 aa).

Residues 67–71 (AGFDK) and threonine 91 each bind FMN. Residue lysine 71 coordinates substrate. Position 116 to 120 (116 to 120 (NAMGF)) interacts with substrate. Residues asparagine 145 and asparagine 178 each contribute to the FMN site. Asparagine 178 is a substrate binding site. Serine 181 serves as the catalytic Nucleophile. Asparagine 183 contacts substrate. Positions 214 and 242 each coordinate FMN. 243 to 244 (NT) contributes to the substrate binding site. FMN-binding positions include glycine 262, glycine 291, and 312–313 (YS).

It belongs to the dihydroorotate dehydrogenase family. Type 2 subfamily. Monomer. The cofactor is FMN.

It is found in the cell membrane. The catalysed reaction is (S)-dihydroorotate + a quinone = orotate + a quinol. Its pathway is pyrimidine metabolism; UMP biosynthesis via de novo pathway; orotate from (S)-dihydroorotate (quinone route): step 1/1. Its function is as follows. Catalyzes the conversion of dihydroorotate to orotate with quinone as electron acceptor. The polypeptide is Dihydroorotate dehydrogenase (quinone) (pyrD) (Helicobacter pylori (strain ATCC 700392 / 26695) (Campylobacter pylori)).